Consider the following 272-residue polypeptide: Short-chain dehydrogenase/reductase iacC (272 aa).

NADP(+) is bound by residues I13, D59, and N88. Catalysis depends on proton donor residues S150 and Y169. NADP(+) is bound by residues Y169, K173, and V202. The Lowers pKa of active site Tyr role is filled by K173.

The protein belongs to the short-chain dehydrogenases/reductases (SDR) family.

The protein operates within secondary metabolite biosynthesis. Its function is as follows. Short-chain dehydrogenase/reductase; part of the gene cluster that mediates the biosynthesis of iso-A82775C, a enylepoxycyclohexane and biosynthetic precursor of the chloropestolide anticancer natural products. Within the cluster, the prenyltransferase iacE prenylates siccayne to generate pestalodiol E, using dimethylallyl diphosphate (DMAPP) as cosubstrate. The probable oxidoreductase iacF is then involved in the epoxidation of pestalodiol F to pestalodiol F, which is further converted to pestalofone A by the short-chain dehydrogenase/reductase iacG. Iso-A82775C is subsequently generated from pestalofone A by the short-chain dehydrogenase/reductase iacC. Iso-A82775C is further condensed with maldoxin via a Diels-Alder reaction to produce the anticancer natural products chloropestolides A to E. The protein is Short-chain dehydrogenase/reductase iacC of Pestalotiopsis fici (strain W106-1 / CGMCC3.15140).